An 843-amino-acid chain; its full sequence is DNA-directed RNA polymerase subunit beta' (843 aa).

Zn(2+)-binding residues include Cys70, Cys72, Cys85, and Cys88. Asp686, Asp688, and Asp690 together coordinate Mg(2+).

The protein belongs to the RNA polymerase beta' chain family. RpoC1 subfamily. In plastids the minimal PEP RNA polymerase catalytic core is composed of four subunits: alpha, beta, beta', and beta''. When a (nuclear-encoded) sigma factor is associated with the core the holoenzyme is formed, which can initiate transcription. Mg(2+) serves as cofactor. Requires Zn(2+) as cofactor.

It localises to the plastid. The protein localises to the chloroplast. It carries out the reaction RNA(n) + a ribonucleoside 5'-triphosphate = RNA(n+1) + diphosphate. Its function is as follows. DNA-dependent RNA polymerase catalyzes the transcription of DNA into RNA using the four ribonucleoside triphosphates as substrates. In Trieres chinensis (Marine centric diatom), this protein is DNA-directed RNA polymerase subunit beta'.